A 115-amino-acid chain; its full sequence is Large ribosomal subunit protein bL19 (115 aa).

Belongs to the bacterial ribosomal protein bL19 family.

In terms of biological role, this protein is located at the 30S-50S ribosomal subunit interface and may play a role in the structure and function of the aminoacyl-tRNA binding site. In Clostridium kluyveri (strain ATCC 8527 / DSM 555 / NBRC 12016 / NCIMB 10680 / K1), this protein is Large ribosomal subunit protein bL19.